We begin with the raw amino-acid sequence, 847 residues long: Protein IRS1 (847 aa).

Disordered regions lie at residues 1–82, 607–627, and 715–847; these read MAQR…NFWH, WLME…ATMP, and QVIP…HVHH. The span at 16-25 shows a compositional bias: gly residues; that stretch reads RGRGAGGPSG. Positions 26–56 are enriched in low complexity; the sequence is VGSSPPSSCVPMGATSTAGTGASAAPTATPG. Positions 723 to 733 are enriched in acidic residues; that stretch reads EPEDDDEDPTY. Over residues 833–847 the composition is skewed to basic residues; it reads RPKKCQTHAPHHVHH.

It belongs to the herpesviridae US22 family. In terms of assembly, interacts (via N-terminus) with the viral DNA polymerase accessory subunit UL44. Interacts (via C-terminus) with host EIF2AK2.

The protein resides in the virion. It localises to the host cytoplasm. It is found in the host nucleus. Functionally, acts as a transactivator along with IE2, and is required for oriLyt-dependent DNA replication in the transient transfection replication assay using native promoters. The protein is Protein IRS1 (IRS1) of Human cytomegalovirus (strain Merlin) (HHV-5).